The following is a 534-amino-acid chain: Kelch repeat and BTB domain-containing protein 4 (534 aa).

The region spanning 61–128 (ADVTISVEGR…IYHGTVKLRA (68 aa)) is the BTB domain. A BACK domain is found at 163-255 (CLQVMWLADR…SLKEIGENVH (93 aa)). Kelch repeat units follow at residues 255–301 (HIYL…KHGG), 302–344 (DLYV…SVPG), 347–394 (AIYS…NLNG), 396–446 (IYLL…VHKD), and 448–497 (VFIV…VFRD).

Component of the BCR(KBTBD4) E3 ubiquitin ligase complex, at least composed of CUL3, KBTBD4 and RBX1.

Its function is as follows. Substrate-specific adapter of a BCR (BTB-CUL3-RBX1) E3 ubiquitin ligase complex which targets CoREST corepressor complex components RCOR1, KDM1A/LSD1 and HDAC2 for proteasomal degradation. RCOR1 is likely to be the primary target while degradation of KDM1A and HDAC2 is likely due to their association with RCOR1. Also targets RCOR3, MIER2 and MIER3 for proteasomal degradation as well as associated proteins ZNF217 and RREB1. Degradation is dependent on the presence of an ELM2 domain in the target proteins. In Mus musculus (Mouse), this protein is Kelch repeat and BTB domain-containing protein 4 (Kbtbd4).